We begin with the raw amino-acid sequence, 215 residues long: Cytochrome b6 (215 aa).

Residues 32-52 traverse the membrane as a helical segment; it reads IFYCIGGITFTCFIMQVASGF. Cys35 contributes to the heme c binding site. Heme b is bound by residues His86 and His100. The next 3 membrane-spanning stretches (helical) occupy residues 90–110, 116–136, and 186–206; these read ASMM…TGGF, LTWV…VTGY, and LHTF…FLMI. Positions 187 and 202 each coordinate heme b.

This sequence belongs to the cytochrome b family. PetB subfamily. In terms of assembly, the 4 large subunits of the cytochrome b6-f complex are cytochrome b6, subunit IV (17 kDa polypeptide, PetD), cytochrome f and the Rieske protein, while the 4 small subunits are PetG, PetL, PetM and PetN. The complex functions as a dimer. Requires heme b as cofactor. It depends on heme c as a cofactor.

The protein resides in the plastid. It is found in the chloroplast thylakoid membrane. Functionally, component of the cytochrome b6-f complex, which mediates electron transfer between photosystem II (PSII) and photosystem I (PSI), cyclic electron flow around PSI, and state transitions. This chain is Cytochrome b6, found in Mesostigma viride (Green alga).